Consider the following 158-residue polypeptide: NADH-quinone oxidoreductase subunit B (158 aa).

Positions 37, 38, 102, and 132 each coordinate [4Fe-4S] cluster.

The protein belongs to the complex I 20 kDa subunit family. NDH-1 is composed of 14 different subunits. Subunits NuoB, C, D, E, F, and G constitute the peripheral sector of the complex. [4Fe-4S] cluster serves as cofactor.

It localises to the cell inner membrane. It carries out the reaction a quinone + NADH + 5 H(+)(in) = a quinol + NAD(+) + 4 H(+)(out). Functionally, NDH-1 shuttles electrons from NADH, via FMN and iron-sulfur (Fe-S) centers, to quinones in the respiratory chain. The immediate electron acceptor for the enzyme in this species is believed to be ubiquinone. Couples the redox reaction to proton translocation (for every two electrons transferred, four hydrogen ions are translocated across the cytoplasmic membrane), and thus conserves the redox energy in a proton gradient. This chain is NADH-quinone oxidoreductase subunit B, found in Thioalkalivibrio sulfidiphilus (strain HL-EbGR7).